Consider the following 176-residue polypeptide: Vitamin K epoxide reductase complex subunit 1-like protein 1 (176 aa).

The Cytoplasmic segment spans residues 1-13 (MAAPVLLRVSVPR). Residues 14 to 36 (WERVARYAVCAAGILLSIYAYHV) form a helical membrane-spanning segment. The Lumenal segment spans residues 37–87 (EREKERDPEHRALCDLGPWVKCSAALASRWGRGFGLLGSIFGKDGVLNQPN). C50 and C58 form a disulfide bridge. A (S)-warfarin-binding site is contributed by N87. The helical transmembrane segment at 88–102 (SVFGLIFYILQLLLG) threads the bilayer. Topologically, residues 103-107 (MTASA) are cytoplasmic. The chain crosses the membrane as a helical span at residues 108–135 (VAALILMTSSIMSVVGSLYLAYILYFVL). Over 136–138 (KEF) the chain is Lumenal. The cysteines at positions 139 and 142 are disulfide-linked. Residues 139–160 (CIICIVTYVLNFLLLIINYKRL) form a helical membrane-spanning segment. 2 residues coordinate phylloquinone: C142 and Y146. Y146 is a binding site for (S)-warfarin. Topologically, residues 161–176 (VYLNEAWKRQLQPKQD) are cytoplasmic.

Belongs to the VKOR family.

It is found in the endoplasmic reticulum membrane. The catalysed reaction is phylloquinone + [protein]-disulfide + H2O = 2,3-epoxyphylloquinone + [protein]-dithiol. The enzyme catalyses phylloquinol + [protein]-disulfide = phylloquinone + [protein]-dithiol. Inhibited by warfarin (coumadin). Warfarin locks VKORC1 in both redox states into the closed conformation. Functionally, involved in vitamin K metabolism. Can reduce inactive vitamin K 2,3-epoxide to active vitamin K, and may contribute to vitamin K-mediated protection against oxidative stress. Plays a role in vitamin K-dependent gamma-carboxylation of Glu residues in target proteins. The sequence is that of Vitamin K epoxide reductase complex subunit 1-like protein 1 (VKORC1L1) from Homo sapiens (Human).